A 355-amino-acid polypeptide reads, in one-letter code: Peptide chain release factor 1 (355 aa).

At glutamine 232 the chain carries N5-methylglutamine. The tract at residues glutamate 282–tyrosine 309 is disordered. Basic and acidic residues predominate over residues alanine 289–arginine 305.

This sequence belongs to the prokaryotic/mitochondrial release factor family. In terms of processing, methylated by PrmC. Methylation increases the termination efficiency of RF1.

The protein resides in the cytoplasm. In terms of biological role, peptide chain release factor 1 directs the termination of translation in response to the peptide chain termination codons UAG and UAA. This chain is Peptide chain release factor 1, found in Desulfatibacillum aliphaticivorans.